A 387-amino-acid polypeptide reads, in one-letter code: Alpha-sarcoglycan (387 aa).

Positions 1–23 are cleaved as a signal peptide; that stretch reads MAETLFWTPLLVVLLAGLGDTEA. Residues 24 to 290 are Extracellular-facing; it reads QQTTLHPLVG…APDRDFLVDA (267 aa). N-linked (GlcNAc...) asparagine glycosylation is found at Asn174 and Asn246. Residues 291–311 traverse the membrane as a helical segment; it reads LVTLLVPLLVALLLTLLLAYV. Residues 312 to 387 are Cytoplasmic-facing; it reads MCCRREGRLK…AQVPLILDQH (76 aa). Ser377 is subject to Phosphoserine.

This sequence belongs to the sarcoglycan alpha/epsilon family. Interacts with the syntrophin SNTA1. Cross-link to form 2 major subcomplexes: one consisting of SGCB, SGCD and SGCG and the other consisting of SGCB and SGCD. The association between SGCB and SGCG is particularly strong while SGCA is loosely associated with the other sarcoglycans. Most strongly expressed in skeletal muscle. Also expressed in cardiac muscle and, at much lower levels, in lung. In the fetus, most abundant in cardiac muscle and, at lower levels, in lung. Also detected in liver and kidney. Not expressed in brain.

It is found in the cell membrane. It localises to the sarcolemma. The protein resides in the cytoplasm. Its subcellular location is the cytoskeleton. In terms of biological role, component of the sarcoglycan complex, a subcomplex of the dystrophin-glycoprotein complex which forms a link between the F-actin cytoskeleton and the extracellular matrix. In Homo sapiens (Human), this protein is Alpha-sarcoglycan (SGCA).